The chain runs to 172 residues: MNQDHPEFDSEDLSQNPPETDPLKAEIESLRSEIALVKADALRERADLENQRKRIARDVENARKFANEKLLGELLPVFDSLDAGLTAAGTEPSPLRDGLDMTYKQLLKVAADNGLTLLDPVGQPFNPDQHQAISQGEAEGVAPGHVVQVFQKGYLLNDRLLRPALVVVAKHD.

The tract at residues Met-1–Leu-23 is disordered.

The protein belongs to the GrpE family. In terms of assembly, homodimer.

It is found in the cytoplasm. Its function is as follows. Participates actively in the response to hyperosmotic and heat shock by preventing the aggregation of stress-denatured proteins, in association with DnaK and GrpE. It is the nucleotide exchange factor for DnaK and may function as a thermosensor. Unfolded proteins bind initially to DnaJ; upon interaction with the DnaJ-bound protein, DnaK hydrolyzes its bound ATP, resulting in the formation of a stable complex. GrpE releases ADP from DnaK; ATP binding to DnaK triggers the release of the substrate protein, thus completing the reaction cycle. Several rounds of ATP-dependent interactions between DnaJ, DnaK and GrpE are required for fully efficient folding. The sequence is that of Protein GrpE from Xanthomonas axonopodis pv. citri (strain 306).